The following is a 188-amino-acid chain: Elongation factor P (188 aa).

The protein belongs to the elongation factor P family.

The protein localises to the cytoplasm. It functions in the pathway protein biosynthesis; polypeptide chain elongation. In terms of biological role, involved in peptide bond synthesis. Stimulates efficient translation and peptide-bond synthesis on native or reconstituted 70S ribosomes in vitro. Probably functions indirectly by altering the affinity of the ribosome for aminoacyl-tRNA, thus increasing their reactivity as acceptors for peptidyl transferase. This chain is Elongation factor P, found in Parabacteroides distasonis (strain ATCC 8503 / DSM 20701 / CIP 104284 / JCM 5825 / NCTC 11152).